We begin with the raw amino-acid sequence, 148 residues long: 3-hydroxyacyl-[acyl-carrier-protein] dehydratase FabZ (148 aa).

Histidine 55 is an active-site residue.

Belongs to the thioester dehydratase family. FabZ subfamily.

Its subcellular location is the cytoplasm. It catalyses the reaction a (3R)-hydroxyacyl-[ACP] = a (2E)-enoyl-[ACP] + H2O. Its function is as follows. Involved in unsaturated fatty acids biosynthesis. Catalyzes the dehydration of short chain beta-hydroxyacyl-ACPs and long chain saturated and unsaturated beta-hydroxyacyl-ACPs. This Haemophilus influenzae (strain PittEE) protein is 3-hydroxyacyl-[acyl-carrier-protein] dehydratase FabZ.